Here is a 651-residue protein sequence, read N- to C-terminus: MAPHVEQLEFQAEARQLLDLMIHSVYSNKDSFLRELISNASDALDKLRLEAFRNKDLDVDTSDLHIEIVVDKEARTLTVRDNGIGMSRDEVVRLIGTLAKSGTAELRQQLREAKDANANEELIGQFGIGFYASFMVADRVELLTRKAGESEATRWESTGEGSYTIETVDQAGGEVPQGTSVTLHLKPEDREDELHDYTSEWKIRELVKQYSDFIAWPVRMDVERRTPASEEGGEETVTVETQTLNSMKALWARPRDEVSDEEYTEFYKHVAHAWDEPLETIAMRAEGTFEYQALLFIPSHAPFDLFQQNATVGVQLYVKRVFIMGDCDQLMPPYLRFVKGVVDAQDMSLNVSREILQQDRQIRAIRRRLTKKVLSTIAEMQAERPEKYRTFWTQFGRVLKEGLLSDTDNQETLLRVSSFASTRSDDEPTTLAEYVERMPEGQTQIFYAAGESRQQLLNSPHLEAFKAKGYEVLLLTDPVDEVWVESIHEFDGKPLQSVAKGEVDLDSEADKEAQETERQQREKEFADVIAWLTEVLGDHVKEVRLSTRLTDSPACLITDTFGITPALARMYRASGQPVPVEKRILELNPTHPLVVGLREAHESRGADDELAGTAELLYGTALLAEGGALEDPARFAGLLADRLTRMVGEQS.

The tract at residues 1–353 is a; substrate-binding; it reads MAPHVEQLEF…AQDMSLNVSR (353 aa). The interval 354-569 is b; it reads EILQQDRQIR…TFGITPALAR (216 aa). The c stretch occupies residues 570 to 651; the sequence is MYRASGQPVP…RLTRMVGEQS (82 aa).

Belongs to the heat shock protein 90 family. Homodimer.

The protein resides in the cytoplasm. Functionally, molecular chaperone. Has ATPase activity. In Mycolicibacterium gilvum (strain PYR-GCK) (Mycobacterium gilvum (strain PYR-GCK)), this protein is Chaperone protein HtpG.